Reading from the N-terminus, the 171-residue chain is Nicotinamide-nucleotide adenylyltransferase (171 aa).

The protein belongs to the archaeal NMN adenylyltransferase family.

Its subcellular location is the cytoplasm. The enzyme catalyses beta-nicotinamide D-ribonucleotide + ATP + H(+) = diphosphate + NAD(+). It participates in cofactor biosynthesis; NAD(+) biosynthesis; NAD(+) from nicotinamide D-ribonucleotide: step 1/1. The polypeptide is Nicotinamide-nucleotide adenylyltransferase (Ignicoccus hospitalis (strain KIN4/I / DSM 18386 / JCM 14125)).